Consider the following 213-residue polypeptide: MKILLIGPPGSGKGSVSELLTKNNTLKHVSTGNLFRAILKEDSELARKIKEINVSGGKLVPDEITNQVAKSAIDELIKNEQSFILDGYPRTINQALALEQYCNLDYIFYLDIDHQELMKRLTGRWMCPKCAGIYNIHFKKPQVHGLCDNDQATLYQRADDHADAVSIRLDEYDKLTLPLIKHYETNPRFIKINANQPIEDVYKNINNYLKQNK.

Position 10 to 15 (10 to 15) interacts with ATP; it reads GSGKGS. The interval 30–60 is NMP; it reads STGNLFRAILKEDSELARKIKEINVSGGKLV. Residues Thr-31, Arg-36, 58–60, 87–90, and Gln-94 contribute to the AMP site; these read KLV and GYPR. The LID stretch occupies residues 123–160; sequence GRWMCPKCAGIYNIHFKKPQVHGLCDNDQATLYQRADD. Arg-124 is a binding site for ATP. Cys-127 and Cys-130 together coordinate Zn(2+). Residue 133–134 coordinates ATP; sequence IY. Residues Cys-147 and Asp-150 each contribute to the Zn(2+) site. Residues Arg-157 and Arg-168 each contribute to the AMP site. Gln-196 serves as a coordination point for ATP.

Belongs to the adenylate kinase family. In terms of assembly, monomer.

It localises to the cytoplasm. The enzyme catalyses AMP + ATP = 2 ADP. It functions in the pathway purine metabolism; AMP biosynthesis via salvage pathway; AMP from ADP: step 1/1. Functionally, catalyzes the reversible transfer of the terminal phosphate group between ATP and AMP. Plays an important role in cellular energy homeostasis and in adenine nucleotide metabolism. This Ureaplasma parvum serovar 3 (strain ATCC 27815 / 27 / NCTC 11736) protein is Adenylate kinase.